We begin with the raw amino-acid sequence, 334 residues long: Protein-methionine-sulfoxide reductase catalytic subunit MsrP (334 aa).

The tat-type signal signal peptide spans 1–44; that stretch reads MKKNQFLKESDITAESVFFMKRRQVLKALGISAAALSLPHAAHA. Residues Asn88, 91-92, Cys146, Thr181, Asn233, Arg238, and 249-251 each bind Mo-molybdopterin; these read YE and GIK.

Belongs to the MsrP family. In terms of assembly, heterodimer of a catalytic subunit (MsrP) and a heme-binding subunit (MsrQ). It depends on Mo-molybdopterin as a cofactor. Post-translationally, predicted to be exported by the Tat system. The position of the signal peptide cleavage has not been experimentally proven.

Its subcellular location is the periplasm. The catalysed reaction is L-methionyl-[protein] + a quinone + H2O = L-methionyl-(S)-S-oxide-[protein] + a quinol. The enzyme catalyses L-methionyl-[protein] + a quinone + H2O = L-methionyl-(R)-S-oxide-[protein] + a quinol. In terms of biological role, part of the MsrPQ system that repairs oxidized periplasmic proteins containing methionine sulfoxide residues (Met-O), using respiratory chain electrons. Thus protects these proteins from oxidative-stress damage caused by reactive species of oxygen and chlorine generated by the host defense mechanisms. MsrPQ is essential for the maintenance of envelope integrity under bleach stress, rescuing a wide series of structurally unrelated periplasmic proteins from methionine oxidation, including the primary periplasmic chaperone SurA and the lipoprotein Pal. The catalytic subunit MsrP is non-stereospecific, being able to reduce both (R-) and (S-) diastereoisomers of methionine sulfoxide. In Shigella dysenteriae serotype 1 (strain Sd197), this protein is Protein-methionine-sulfoxide reductase catalytic subunit MsrP.